A 551-amino-acid polypeptide reads, in one-letter code: Solute carrier family 22 member 3 (551 aa).

The chain crosses the membrane as a helical span at residues 21–41 (VFLLLCLTGVTFAFLFVGVVF). Residues N72, N99, and N114 are each glycosylated (N-linked (GlcNAc...) asparagine). The helical transmembrane segment at 177–197 (LIIYLISCFGVGITGVVVAFA) threads the bilayer. Residue N199 is glycosylated (N-linked (GlcNAc...) asparagine). The next 2 membrane-spanning stretches (helical) occupy residues 236-256 (IVGIVIQMFFTLGIIILPGIA) and 264-284 (GIQLAISLPSFLFLLYYWVVP). The short motif at 284 to 288 (PESPR) is the Proline-rich sequence element. A glycan (N-linked (GlcNAc...) asparagine) is linked at N317. 3 helical membrane-spanning segments follow: residues 376-396 (IDFFISGLVELPGALLILLTI), 464-484 (GVSLCSGLCDFGGIIAPFLLF), and 493-513 (LPLIIFGILASVCGGLVMLLP).

It belongs to the major facilitator (TC 2.A.1) superfamily. Organic cation transporter (TC 2.A.1.19) family. Highly expressed in placenta. Highly expressed in kidney cortex. In kidney, expressed specifically in the proximal and distal convoluted tubules and within Bowman capsule. Expressed in brain, particularly in dopaminergic neurons of the substantia nigra compacta, non-aminergic neurons of the ventral tegmental area, substantia nigra reticulata, locus coeruleus, hippocampus and cortex. In brain, also detected in astrocytes in the substantia nigra reticulata, several hypothalamic nuclei and nigrostriatal region. Expressed in neurons and glial cells of amygdala.

It localises to the cell membrane. It is found in the apical cell membrane. The protein localises to the basolateral cell membrane. Its subcellular location is the mitochondrion membrane. The protein resides in the endomembrane system. It localises to the nucleus membrane. It is found in the nucleus outer membrane. The enzyme catalyses (R)-noradrenaline(out) = (R)-noradrenaline(in). It carries out the reaction (R)-adrenaline(out) = (R)-adrenaline(in). It catalyses the reaction serotonin(out) = serotonin(in). The catalysed reaction is dopamine(out) = dopamine(in). The enzyme catalyses histamine(out) = histamine(in). It carries out the reaction tyramine(in) = tyramine(out). It catalyses the reaction guanidine(out) = guanidine(in). The catalysed reaction is agmatine(out) = agmatine(in). The enzyme catalyses spermidine(in) = spermidine(out). It carries out the reaction L-histidyl-L-proline diketopiperazine(in) = L-histidyl-L-proline diketopiperazine(out). It catalyses the reaction (R)-salsolinol(in) = (R)-salsolinol(out). In terms of biological role, electrogenic voltage-dependent transporter that mediates the transport of a variety of organic cations such as endogenous bioactive amines, cationic drugs and xenobiotics. Cation cellular uptake or release is driven by the electrochemical potential, i.e. membrane potential and concentration gradient. Functions as a Na(+)- and Cl(-)-independent, bidirectional uniporter. Implicated in monoamine neurotransmitters uptake such as dopamine, adrenaline/epinephrine, noradrenaline/norepinephrine, homovanillic acid, histamine, serotonin and tyramine, thereby supporting a role in homeostatic regulation of aminergic neurotransmission in the brain. Transports dopaminergic neuromodulators cyclo(his-pro) and salsolinol with low efficiency. May be involved in the uptake and disposition of cationic compounds by renal clearance from the blood flow. May contribute to regulate the transport of cationic compounds in testis across the blood-testis-barrier. Mediates the transport of polyamine spermidine and putrescine. Mediates the bidirectional transport of polyamine agmatine. Also transports guanidine. May also mediate intracellular transport of organic cations, thereby playing a role in amine metabolism and intracellular signaling. This is Solute carrier family 22 member 3 from Mus musculus (Mouse).